A 216-amino-acid polypeptide reads, in one-letter code: A-type ATP synthase subunit D (216 aa).

This sequence belongs to the V-ATPase D subunit family. In terms of assembly, has multiple subunits with at least A(3), B(3), C, D, E, F, H, I and proteolipid K(x). In terms of processing, the N-terminus is blocked.

It localises to the cell membrane. Its function is as follows. Component of the A-type ATP synthase that produces ATP from ADP in the presence of a proton gradient across the membrane. This is A-type ATP synthase subunit D from Sulfurisphaera tokodaii (strain DSM 16993 / JCM 10545 / NBRC 100140 / 7) (Sulfolobus tokodaii).